Reading from the N-terminus, the 322-residue chain is 1-aminocyclopropane-1-carboxylate oxidase 1 (322 aa).

The Fe2OG dioxygenase domain maps to 159-259; the sequence is PTFGTKVSSY…RMSIASFYNP (101 aa). Fe cation-binding residues include His183, Asp185, and His240.

It belongs to the iron/ascorbate-dependent oxidoreductase family. The cofactor is Fe cation.

The enzyme catalyses 1-aminocyclopropane-1-carboxylate + L-ascorbate + O2 = ethene + L-dehydroascorbate + hydrogen cyanide + CO2 + 2 H2O. Its pathway is alkene biosynthesis; ethylene biosynthesis via S-adenosyl-L-methionine; ethylene from S-adenosyl-L-methionine: step 2/2. This is 1-aminocyclopropane-1-carboxylate oxidase 1 (ACO1) from Oryza sativa subsp. japonica (Rice).